The chain runs to 398 residues: Argininosuccinate synthase (398 aa).

ATP is bound at residue 8 to 16; the sequence is AYSGGLDTS. Tyr-87 is a binding site for L-citrulline. ATP is bound at residue Gly-117. L-aspartate contacts are provided by Thr-119, Asn-123, and Asp-124. L-citrulline is bound at residue Asn-123. Residues Arg-127, Ser-175, Glu-260, and Tyr-272 each coordinate L-citrulline.

This sequence belongs to the argininosuccinate synthase family. Type 1 subfamily. As to quaternary structure, homotetramer.

The protein resides in the cytoplasm. The catalysed reaction is L-citrulline + L-aspartate + ATP = 2-(N(omega)-L-arginino)succinate + AMP + diphosphate + H(+). It functions in the pathway amino-acid biosynthesis; L-arginine biosynthesis; L-arginine from L-ornithine and carbamoyl phosphate: step 2/3. The sequence is that of Argininosuccinate synthase from Mycobacterium ulcerans (strain Agy99).